The sequence spans 153 residues: Sec-independent protein translocase protein TatB (153 aa).

The chain crosses the membrane as a helical span at residues 1–21 (MFGISFSELLLVGLVALLVLG). The disordered stretch occupies residues 78 to 153 (MFAQNQHPET…HDSSLPPRAP (76 aa)).

This sequence belongs to the TatB family. In terms of assembly, the Tat system comprises two distinct complexes: a TatABC complex, containing multiple copies of TatA, TatB and TatC subunits, and a separate TatA complex, containing only TatA subunits. Substrates initially bind to the TatABC complex, which probably triggers association of the separate TatA complex to form the active translocon.

Its subcellular location is the cell inner membrane. In terms of biological role, part of the twin-arginine translocation (Tat) system that transports large folded proteins containing a characteristic twin-arginine motif in their signal peptide across membranes. Together with TatC, TatB is part of a receptor directly interacting with Tat signal peptides. TatB may form an oligomeric binding site that transiently accommodates folded Tat precursor proteins before their translocation. The polypeptide is Sec-independent protein translocase protein TatB (Pseudomonas savastanoi pv. phaseolicola (strain 1448A / Race 6) (Pseudomonas syringae pv. phaseolicola (strain 1448A / Race 6))).